Here is a 499-residue protein sequence, read N- to C-terminus: MINRALISVYNKEGLLELAQFLKNKGVELISTGGTYKYLEQNDIQVTEVSKITGFDEILDGRVKTLHPVIHSGILAKRDNKEHMDTIAKKDILPIDMVVVNLYPFFDKVDDNITFEEKVEFIDIGGPTMIRAAAKNFKDVIVVTDVGDYSKLIEEIDSKGDVPYDFRKKLAGKVFNLMSAYDGAISNFLLEEDYPEYLSLSYKKMDNLRYGENPHQSAAYYTATAGTAPMKDFTQLNGKQLSYNNIKDMDIAWKVVNEFEEICCVAVKHNTPCGVALGKDLYEAYVKTYECDPTSIFGGIIAVNRKLDVKTAEEISKIFVEIVIAPDFDEEALKVLMEKKNLRIIKCSVKPTNSMEIAKVDGGILVQSADDKLVENMEVVTDKKPSKEEINNLIFGMKVCKYVKSNAIVVVKDFMAKGIGGGQVNRIWPTCHALDRAGDGVVLASDAFFPFNDVVCEAAKYGIKAIIQPGGSVRDKDSIEECNKNGISMVFTGVRHFKH.

The 144-residue stretch at 1–144 (MINRALISVY…KNFKDVIVVT (144 aa)) folds into the MGS-like domain.

The protein belongs to the PurH family.

The catalysed reaction is (6R)-10-formyltetrahydrofolate + 5-amino-1-(5-phospho-beta-D-ribosyl)imidazole-4-carboxamide = 5-formamido-1-(5-phospho-D-ribosyl)imidazole-4-carboxamide + (6S)-5,6,7,8-tetrahydrofolate. It catalyses the reaction IMP + H2O = 5-formamido-1-(5-phospho-D-ribosyl)imidazole-4-carboxamide. The protein operates within purine metabolism; IMP biosynthesis via de novo pathway; 5-formamido-1-(5-phospho-D-ribosyl)imidazole-4-carboxamide from 5-amino-1-(5-phospho-D-ribosyl)imidazole-4-carboxamide (10-formyl THF route): step 1/1. It functions in the pathway purine metabolism; IMP biosynthesis via de novo pathway; IMP from 5-formamido-1-(5-phospho-D-ribosyl)imidazole-4-carboxamide: step 1/1. This Clostridium kluyveri (strain NBRC 12016) protein is Bifunctional purine biosynthesis protein PurH.